Reading from the N-terminus, the 638-residue chain is Epithelial sodium channel subunit beta (638 aa).

Over 1–50 (MPVKKYLLKCLHRLQKGPGYTYKELLVWYCNNTNTHGPKRIICEGPKKKA) the chain is Cytoplasmic. The chain crosses the membrane as a helical span at residues 51 to 71 (MWFLLTLLFACLVCWQWGVFI). Over 72–530 (QTYLSWEVSV…GGQFGFWMGG (459 aa)) the chain is Extracellular. 9 disulfides stabilise this stretch: Cys-98/Cys-270, Cys-182/Cys-187, Cys-194/Cys-201, Cys-247/Cys-254, Cys-359/Cys-446, Cys-384/Cys-442, Cys-388/Cys-438, Cys-397/Cys-424, and Cys-399/Cys-413. 2 N-linked (GlcNAc...) asparagine glycosylation sites follow: Asn-135 and Asn-141. N-linked (GlcNAc...) asparagine glycosylation is present at Asn-205. Residues 531 to 551 (SVLCLIEFGEIIIDFIWITII) traverse the membrane as a helical segment. Residues 552–638 (KLVASCKGLR…MESDSEVEAI (87 aa)) lie on the Cytoplasmic side of the membrane. The disordered stretch occupies residues 594 to 620 (SCRPHGEVYPDQQTLPIPGTPPPNYDS). A PY motif; recruits WW domain-containing proteins and is thereby required for ubiquitination and inhibition of the channel by NEDD4 and NEDD4L motif is present at residues 614–618 (PPPNY). A phosphoserine mark is found at Ser-631 and Ser-633.

It belongs to the amiloride-sensitive sodium channel (TC 1.A.6) family. SCNN1B subfamily. Component of the heterotrimeric epithelial sodium channel (ENaC) composed of an alpha/SCNN1A, a beta/SCNN1B and a gamma/SCNN1G subunit. Interacts with WWP1 (via WW domains). Interacts with WWP2 (via WW domains); inhibits the channel. Interacts with the full-length immature form of PCSK9 (pro-PCSK9). Interacts (N-glycosylated) with BPIFA1; the interaction is direct and inhibits the proteolytic processing of SCNN1A and SCNN1G and the activation of ENaC. Post-translationally, ubiquitinated. Can be ubiquitinated at multiple sites and undergo monoubiquitination and polyubiquitination. Ubiquitination by NEDD4 or NEDD4L inhibits the ENaC channel through endocytosis, intracellular retention and degradation of its individual subunits. However, some studies could not confirm the ubiquitination of this subunit of the ENaC. In terms of processing, N-glycosylated. N-glycosylation is required for interaction with BPIFA1. Phosphorylated on serine and threonine residues. Aldosterone and insulin increase the basal level of phosphorylation. In terms of tissue distribution, lung and kidney.

The protein resides in the apical cell membrane. The protein localises to the cytoplasmic vesicle membrane. The enzyme catalyses Na(+)(in) = Na(+)(out). Originally identified and characterized by its inhibition by the diuretic drug amiloride. In terms of biological role, this is one of the three pore-forming subunits of the heterotrimeric epithelial sodium channel (ENaC), a critical regulator of sodium balance and fluid homeostasis. ENaC operates in epithelial tissues, where it mediates the electrodiffusion of sodium ions from extracellular fluid through the apical membrane of cells, with water following osmotically. It plays a key role in maintaining sodium homeostasis through electrogenic sodium reabsorption in the kidneys. This subunit is not essential for ENaC function in airway surface liquid homeostasis and proper mucus clearance. The chain is Epithelial sodium channel subunit beta from Mus musculus (Mouse).